The chain runs to 266 residues: 4-diphosphocytidyl-2-C-methyl-D-erythritol kinase (266 aa).

Residue lysine 11 is part of the active site. 103 to 113 (PTFAGLGGGSS) contacts ATP. The active site involves aspartate 145.

It belongs to the GHMP kinase family. IspE subfamily.

The enzyme catalyses 4-CDP-2-C-methyl-D-erythritol + ATP = 4-CDP-2-C-methyl-D-erythritol 2-phosphate + ADP + H(+). Its pathway is isoprenoid biosynthesis; isopentenyl diphosphate biosynthesis via DXP pathway; isopentenyl diphosphate from 1-deoxy-D-xylulose 5-phosphate: step 3/6. Functionally, catalyzes the phosphorylation of the position 2 hydroxy group of 4-diphosphocytidyl-2C-methyl-D-erythritol. In Sulfurimonas denitrificans (strain ATCC 33889 / DSM 1251) (Thiomicrospira denitrificans (strain ATCC 33889 / DSM 1251)), this protein is 4-diphosphocytidyl-2-C-methyl-D-erythritol kinase.